Reading from the N-terminus, the 551-residue chain is MAKTVSWHIINAKILDVFNLTFETSELWIDHDKIVYRGRRSDLQAQHTFDAQGQYIVPGLIDAHMHIESSLLAPSEFSKLVVPHGITRVIADPHEIASVAGVSGIQYMLEEARQSQLHIHYMLPSSVPATPFEHAGATLHADALKPFYSVPEVNGLAEVMDFPAVFNEDEDMHQKISDSQAAGKHVDGHASGLSREQLAIYRKYGIDTDHESENAQQARDRLNAGFSVFVREGTVERDESAILPAISVANQAHFSFATDDKTANDIQHEGAIDFNVKLAIQSGMSPAMAFTIASYNAATAHRLDNVGALTDGYVADLVIIDSLDDFNIKKVMISGQWYVEPETTVLPLANQSLNFTLTVDDLKLPINDKKPAHVIEIMPHHITTTHLVEDVPSQEGLFVADKTYTKIVVAERYHNLGHGVGIIKGFQMTDGAIASTIAHDSHNIIIAGTNDEDMLLAANKLREIGGGEVVVNNGQITTLPLAIGGLMSEQSYTTVIQENNTLQAAFSKISHLNFDPFLTLSFMALPVIPSLKITDQGLFDFNTFSFINIQD.

It belongs to the metallo-dependent hydrolases superfamily. Adenine deaminase family. Requires Mn(2+) as cofactor.

The catalysed reaction is adenine + H2O + H(+) = hypoxanthine + NH4(+). The protein is Adenine deaminase of Leuconostoc citreum (strain KM20).